Reading from the N-terminus, the 427-residue chain is 3-phosphoshikimate 1-carboxyvinyltransferase (427 aa).

Residues Lys22, Ser23, and Arg27 each contribute to the 3-phosphoshikimate site. Lys22 serves as a coordination point for phosphoenolpyruvate. The phosphoenolpyruvate site is built by Gly96 and Arg124. Residues Ser169, Ser170, Gln171, Ser197, Asp313, Asn336, and Lys340 each contribute to the 3-phosphoshikimate site. Position 171 (Gln171) interacts with phosphoenolpyruvate. Asp313 serves as the catalytic Proton acceptor. The phosphoenolpyruvate site is built by Arg344, Arg386, and Lys411.

This sequence belongs to the EPSP synthase family. Monomer.

It localises to the cytoplasm. The enzyme catalyses 3-phosphoshikimate + phosphoenolpyruvate = 5-O-(1-carboxyvinyl)-3-phosphoshikimate + phosphate. It participates in metabolic intermediate biosynthesis; chorismate biosynthesis; chorismate from D-erythrose 4-phosphate and phosphoenolpyruvate: step 6/7. Functionally, catalyzes the transfer of the enolpyruvyl moiety of phosphoenolpyruvate (PEP) to the 5-hydroxyl of shikimate-3-phosphate (S3P) to produce enolpyruvyl shikimate-3-phosphate and inorganic phosphate. The polypeptide is 3-phosphoshikimate 1-carboxyvinyltransferase (Salmonella schwarzengrund (strain CVM19633)).